Reading from the N-terminus, the 334-residue chain is Beta-hexosaminidase (334 aa).

Substrate-binding positions include Asp57, Arg65, Arg128, and Lys158 to His159. The Proton donor/acceptor role is filled by His171. Asp242 functions as the Nucleophile in the catalytic mechanism.

This sequence belongs to the glycosyl hydrolase 3 family. NagZ subfamily.

It is found in the cytoplasm. The enzyme catalyses Hydrolysis of terminal non-reducing N-acetyl-D-hexosamine residues in N-acetyl-beta-D-hexosaminides.. It functions in the pathway cell wall biogenesis; peptidoglycan recycling. Its function is as follows. Plays a role in peptidoglycan recycling by cleaving the terminal beta-1,4-linked N-acetylglucosamine (GlcNAc) from peptide-linked peptidoglycan fragments, giving rise to free GlcNAc, anhydro-N-acetylmuramic acid and anhydro-N-acetylmuramic acid-linked peptides. The sequence is that of Beta-hexosaminidase from Methylococcus capsulatus (strain ATCC 33009 / NCIMB 11132 / Bath).